We begin with the raw amino-acid sequence, 277 residues long: Cell division protein ZipA (277 aa).

Over 1 to 5 (MQDLR) the chain is Periplasmic. A helical membrane pass occupies residues 6–26 (LMLLLFGVITIIVLFLHGVWA). Residues 27 to 277 (RRKERSALFY…NALIRSTPHL (251 aa)) are Cytoplasmic-facing. The disordered stretch occupies residues 120–139 (QKKSDDLSHQSKETHHPSIQ).

This sequence belongs to the ZipA family. Interacts with FtsZ via their C-terminal domains.

It is found in the cell inner membrane. Essential cell division protein that stabilizes the FtsZ protofilaments by cross-linking them and that serves as a cytoplasmic membrane anchor for the Z ring. Also required for the recruitment to the septal ring of downstream cell division proteins. In Hamiltonella defensa subsp. Acyrthosiphon pisum (strain 5AT), this protein is Cell division protein ZipA.